The sequence spans 579 residues: Mycobactin import ATP-binding/permease protein IrtB (579 aa).

At 1–25 (MIRTLLRLVPAEKRGAVAGYAVLTL) the chain is on the cytoplasmic side. Positions 21–299 (AVLTLLSVLL…IADLAPALET (279 aa)) constitute an ABC transmembrane type-1 domain. The chain crosses the membrane as a helical span at residues 26–46 (LSVLLRAVGAVLLIPLLAALF). Topologically, residues 47–48 (SD) are periplasmic. A helical transmembrane segment spans residues 49-69 (TPSDAWLWLGWLTAVTLAGWV). Over 70–126 (TDTNTARLGFDLGFAVLSRTQHDMADRLPNVAMSWFTPDNTATARQAIAATGPELAG) the chain is Cytoplasmic. Transmembrane regions (helical) follow at residues 127–147 (LVVNLLTPLIGAALLPAAIGV) and 148–168 (ALLFVSVPLGLAALAGVAVLF). Residues 169–241 (GALALSGRLS…RLLTMQIPGQ (73 aa)) are Cytoplasmic-facing. A helical membrane pass occupies residues 242 to 262 (VLFSLAGQVALIGFAGMAVWL). Topologically, residues 263 to 272 (TVRGQLGVPE) are periplasmic. Residues 273–293 (AIALIVVLVRYLEPFAAIADL) traverse the membrane as a helical segment. Topologically, residues 294-579 (APALETTRAT…SEWAIGSTAR (286 aa)) are cytoplasmic. Residues 332–565 (IEFDDVRFSY…GGRFAQFWAQ (234 aa)) enclose the ABC transporter domain. An ATP-binding site is contributed by 364 to 371 (GPSGSGKT).

This sequence belongs to the ABC transporter superfamily. Siderophore-Fe(3+) uptake transporter (SIUT) (TC 3.A.1.21) family. In terms of assembly, forms a heterodimer with IrtA.

It localises to the cell inner membrane. Its activity is regulated as follows. The ATPase activity of IrtAB is stimulated more than 38-fold in the presence of Fe-MBT, and more than 10-fold in the presence of Fe-cMBT. Functionally, part of the ABC transporter complex IrtAB involved in the import of iron-bound mycobactin (Fe-MBT) and carboxymycobactin (Fe-cMBT). Has a preference for Fe-MBT over Fe-cMBT. Transmembrane domains (TMD) form a pore in the membrane and the ATP-binding domain (NBD) is responsible for energy generation. This Mycolicibacterium thermoresistibile (strain ATCC 19527 / DSM 44167 / CIP 105390 / JCM 6362 / NCTC 10409 / 316) (Mycobacterium thermoresistibile) protein is Mycobactin import ATP-binding/permease protein IrtB.